Reading from the N-terminus, the 65-residue chain is Putative antitoxin PF2058 (65 aa).

This sequence belongs to the UPF0165 family.

In terms of biological role, possibly the antitoxin component of a type II toxin-antitoxin (TA) system. This chain is Putative antitoxin PF2058, found in Pyrococcus furiosus (strain ATCC 43587 / DSM 3638 / JCM 8422 / Vc1).